The following is a 299-amino-acid chain: uncharacterized protein (299 aa).

A helical transmembrane segment spans residues 25-45 (LLYFFKSLAMILFFIFFSLTS).

The protein localises to the membrane. This is an uncharacterized protein from Rickettsia prowazekii (strain Madrid E).